The sequence spans 304 residues: Probable cobalamin biosynthesis protein CobD (304 aa).

The next 5 helical transmembrane spans lie at 2-22, 50-70, 73-93, 147-167, and 284-304; these read IVVL…KEYI, ILFS…AVYL, FILV…FSIT, VDGY…GAFI, and AAYS…AVFL.

It belongs to the CobD/CbiB family.

Its subcellular location is the cell membrane. Its pathway is cofactor biosynthesis; adenosylcobalamin biosynthesis. Its function is as follows. Converts cobyric acid to cobinamide by the addition of aminopropanol on the F carboxylic group. In Thermoplasma volcanium (strain ATCC 51530 / DSM 4299 / JCM 9571 / NBRC 15438 / GSS1), this protein is Probable cobalamin biosynthesis protein CobD.